The chain runs to 1090 residues: Aminopeptidase-like protein AC3.5 (1090 aa).

The Cytoplasmic portion of the chain corresponds to 1 to 77; sequence MEDVDLGKDR…KPKKRIACSP (77 aa). Residues 21–33 show a composition bias toward low complexity; the sequence is GNGSASNLNNRNN. The interval 21–71 is disordered; sequence GNGSASNLNNRNNIPLSEKAAKEPLQTQPQEAPPAPKPKVQKQKPPVKPKK. The segment covering 59-71 has biased composition (basic residues); sequence KVQKQKPPVKPKK. A helical; Signal-anchor for type II membrane protein transmembrane segment spans residues 78–98; sequence GSAICLFLLAVAAIIFAAFLG. The Lumenal portion of the chain corresponds to 99–1090; that stretch reads HYLTKQNYEM…DEMESSEEQE (992 aa). Residues asparagine 115, asparagine 123, asparagine 143, asparagine 176, and asparagine 230 are each glycosylated (N-linked (GlcNAc...) asparagine). Residues 217–259 are disordered; that stretch reads VTKRAKKSVDSGTNSTSEMPEGSGEEAMATTATTTTTESTTPV. The segment covering 241–257 has biased composition (low complexity); it reads EEAMATTATTTTTESTT. Residues asparagine 402, asparagine 710, asparagine 723, asparagine 789, asparagine 894, asparagine 919, asparagine 964, and asparagine 993 are each glycosylated (N-linked (GlcNAc...) asparagine). A compositionally biased stretch (basic and acidic residues) spans 1069 to 1080; sequence YLDGKMKGPAKD. A disordered region spans residues 1069–1090; sequence YLDGKMKGPAKDDEMESSEEQE. Acidic residues predominate over residues 1081–1090; it reads DEMESSEEQE.

The protein belongs to the peptidase M1 family.

It is found in the membrane. This Caenorhabditis elegans protein is Aminopeptidase-like protein AC3.5.